A 193-amino-acid polypeptide reads, in one-letter code: E3 ubiquitin-protein ligase RMA2 (193 aa).

Residues 21-75 (CNICLDQVRDPVVTLCGHLFCWPCIHKWTYASNNSRQRVDQYDHKREPPKCPVCK) form an RING-type zinc finger. Residues 175 to 192 (LSRVYLFLLCFMFMCLFL) form a helical; Anchor for type IV membrane protein membrane-spanning segment.

Interacts with ERABP1. In terms of tissue distribution, barely detected in roots and limited to the root tips. Expressed in leaf hydathodes and in siliques.

It is found in the endoplasmic reticulum membrane. The catalysed reaction is S-ubiquitinyl-[E2 ubiquitin-conjugating enzyme]-L-cysteine + [acceptor protein]-L-lysine = [E2 ubiquitin-conjugating enzyme]-L-cysteine + N(6)-ubiquitinyl-[acceptor protein]-L-lysine.. It participates in protein modification; protein ubiquitination. E3 ubiquitin-protein ligase that promotes the ubiquitination and proteasomal degradation of the auxin-binding protein ERABP1. In Arabidopsis thaliana (Mouse-ear cress), this protein is E3 ubiquitin-protein ligase RMA2 (RMA2).